The chain runs to 929 residues: Leucine--tRNA ligase (929 aa).

The short motif at 42 to 52 is the 'HIGH' region element; that stretch reads PYPSGNLHMGH. The short motif at 614–618 is the 'KMSKS' region element; it reads KMSKS. Residue Lys617 coordinates ATP.

The protein belongs to the class-I aminoacyl-tRNA synthetase family.

Its subcellular location is the cytoplasm. It carries out the reaction tRNA(Leu) + L-leucine + ATP = L-leucyl-tRNA(Leu) + AMP + diphosphate. The sequence is that of Leucine--tRNA ligase from Trichodesmium erythraeum (strain IMS101).